Here is a 127-residue protein sequence, read N- to C-terminus: Protein NEGATIVE REGULATOR OF RESISTANCE (127 aa).

Disordered stretches follow at residues 1–28 and 47–127; these read MDAT…VDEV and TRRL…RAPA. Residues 112–127 are compositionally biased toward low complexity; it reads PPSDAPATPRSARAPA.

Belongs to the NPR1-interactor family. As to quaternary structure, interacts with NPR1/NH1. Interacts with NPR3/NH3.

It localises to the nucleus. Functionally, acts as a negative regulator of disease resistance. Acts on basal resistance, age-related resistance and resistance mediated by the LRR receptor kinase XA21. Plants over-expressing NRR display enhanced susceptibility to the bacterial blight Xanthomonas oryzae pv. oryzae (Xoo). Binds to and represses NPR1/NH1-mediated transcriptional activation of LG2 in vitro. This Oryza sativa subsp. japonica (Rice) protein is Protein NEGATIVE REGULATOR OF RESISTANCE.